Reading from the N-terminus, the 297-residue chain is Transmembrane protein 178A (297 aa).

Positions 1 to 25 are cleaved as a signal peptide; that stretch reads MEPRALVTALSLGLSLCSLGLLVTA. Over 26 to 179 the chain is Extracellular; sequence IFTDHWYETD…LLHLRRITAG (154 aa). Residues 41 to 57 show a composition bias toward basic and acidic residues; that stretch reads ESCERSRAGADPPDQKN. The segment at 41 to 86 is disordered; that stretch reads ESCERSRAGADPPDQKNRLMPLSHLPLRDSPPLGRRLLPGGPGRSD. Positions 68–79 are enriched in low complexity; the sequence is RDSPPLGRRLLP. Asn-158 is a glycosylation site (N-linked (GlcNAc...) asparagine). A helical membrane pass occupies residues 180–200; sequence FLGMAVAVLLCGCIVATVSFF. The Cytoplasmic portion of the chain corresponds to 201 to 208; sequence WEESLTQH. Residues 209–229 traverse the membrane as a helical segment; it reads VAGLLFLMTGIFCTISLCTYA. Residues 230-257 are Extracellular-facing; that stretch reads ASVSYDLNRVPKLIYSLPHDVEHGYSWS. The chain crosses the membrane as a helical span at residues 258-278; that stretch reads IFCAWCSLGFIVAAGGLCIAY. The Cytoplasmic segment spans residues 279-297; that stretch reads PFISRTKIAHLKSGRDSTV.

It belongs to the TMEM178 family. Interacts with STIM1. Highly expressed in the bone and its expression increases during osteoclastogenesis.

The protein resides in the endoplasmic reticulum membrane. Acts as a negative regulator of osteoclast differentiation in basal and inflammatory conditions by regulating TNFSF11-induced Ca (2+) fluxes, thereby controlling the induction of NFATC1. This is Transmembrane protein 178A (Tmem178a) from Mus musculus (Mouse).